A 457-amino-acid polypeptide reads, in one-letter code: Secreted RxLR effector protein 8 (457 aa).

The first 19 residues, 1-19 (MRGTLATALLLVISSRVAT), serve as a signal peptide directing secretion. Positions 48–69 (RFLRGSRKQRDDLAPTAADENR) match the RxLR-dEER motif. Asparagine 68 is a glycosylation site (N-linked (GlcNAc...) asparagine). Disordered regions lie at residues 110–188 (RLSL…ALKS) and 398–457 (RQTI…RSSS). A compositionally biased stretch (low complexity) spans 135–152 (SASTSTTSDIATSSSRTS). 2 stretches are compositionally biased toward polar residues: residues 153-163 (NQRTPKTQASL) and 176-187 (SKNQFKKSTALK). Residues 442–457 (IKSKDHARKKRPRSSS) are compositionally biased toward basic residues.

The protein belongs to the RxLR effector family.

It localises to the secreted. The protein localises to the host nucleus. Its function is as follows. Secreted effector that completely suppresses the host cell death induced by cell death-inducing proteins. This chain is Secreted RxLR effector protein 8, found in Plasmopara viticola (Downy mildew of grapevine).